A 687-amino-acid polypeptide reads, in one-letter code: Polyphosphate kinase (687 aa).

Asn45 is an ATP binding site. Mg(2+)-binding residues include Arg375 and Arg405. The active-site Phosphohistidine intermediate is the His435. ATP contacts are provided by Tyr472, Arg568, and His596.

Belongs to the polyphosphate kinase 1 (PPK1) family. It depends on Mg(2+) as a cofactor. Post-translationally, an intermediate of this reaction is the autophosphorylated ppk in which a phosphate is covalently linked to a histidine residue through a N-P bond.

The catalysed reaction is [phosphate](n) + ATP = [phosphate](n+1) + ADP. Catalyzes the reversible transfer of the terminal phosphate of ATP to form a long-chain polyphosphate (polyP). The chain is Polyphosphate kinase from Burkholderia ambifaria (strain ATCC BAA-244 / DSM 16087 / CCUG 44356 / LMG 19182 / AMMD) (Burkholderia cepacia (strain AMMD)).